The primary structure comprises 437 residues: 3-phosphoshikimate 1-carboxyvinyltransferase (437 aa).

3-phosphoshikimate contacts are provided by lysine 28, serine 29, and arginine 33. Lysine 28 contacts phosphoenolpyruvate. Phosphoenolpyruvate is bound by residues glycine 97 and arginine 125. Residues serine 168, serine 169, glutamine 170, glutamate 316, and histidine 343 each coordinate 3-phosphoshikimate. Glutamine 170 is a phosphoenolpyruvate binding site. Glutamate 316 functions as the Proton acceptor in the catalytic mechanism. Phosphoenolpyruvate contacts are provided by arginine 347, arginine 388, and lysine 413.

This sequence belongs to the EPSP synthase family. In terms of assembly, monomer.

The protein localises to the cytoplasm. The catalysed reaction is 3-phosphoshikimate + phosphoenolpyruvate = 5-O-(1-carboxyvinyl)-3-phosphoshikimate + phosphate. It participates in metabolic intermediate biosynthesis; chorismate biosynthesis; chorismate from D-erythrose 4-phosphate and phosphoenolpyruvate: step 6/7. Catalyzes the transfer of the enolpyruvyl moiety of phosphoenolpyruvate (PEP) to the 5-hydroxyl of shikimate-3-phosphate (S3P) to produce enolpyruvyl shikimate-3-phosphate and inorganic phosphate. The chain is 3-phosphoshikimate 1-carboxyvinyltransferase from Rhodococcus erythropolis (strain PR4 / NBRC 100887).